The sequence spans 193 residues: NAD(P)H-quinone oxidoreductase subunit I (193 aa).

4Fe-4S ferredoxin-type domains lie at 55–84 and 95–124; these read GRIHFEFDKCISCEVCVRVCPINLPVVDWE and KHYSIDFGVCIFCANCVEYCPTNCLSVTEE. Residues Cys-64, Cys-67, Cys-70, Cys-74, Cys-104, Cys-107, Cys-110, and Cys-114 each coordinate [4Fe-4S] cluster.

Belongs to the complex I 23 kDa subunit family. In terms of assembly, NDH-1 is composed of at least 11 different subunits. Requires [4Fe-4S] cluster as cofactor.

It localises to the cellular thylakoid membrane. The catalysed reaction is a plastoquinone + NADH + (n+1) H(+)(in) = a plastoquinol + NAD(+) + n H(+)(out). It carries out the reaction a plastoquinone + NADPH + (n+1) H(+)(in) = a plastoquinol + NADP(+) + n H(+)(out). In terms of biological role, NDH-1 shuttles electrons from an unknown electron donor, via FMN and iron-sulfur (Fe-S) centers, to quinones in the respiratory and/or the photosynthetic chain. The immediate electron acceptor for the enzyme in this species is believed to be plastoquinone. Couples the redox reaction to proton translocation, and thus conserves the redox energy in a proton gradient. The sequence is that of NAD(P)H-quinone oxidoreductase subunit I from Cyanothece sp. (strain PCC 7425 / ATCC 29141).